Consider the following 383-residue polypeptide: Outer membrane protein assembly factor BamB (383 aa).

The N-terminal stretch at 1-23 (MMLLKRCNRRALVALAAVLLLAA) is a signal peptide. Cys-24 is lipidated: N-palmitoyl cysteine. Residue Cys-24 is the site of S-diacylglycerol cysteine attachment.

This sequence belongs to the BamB family. Part of the Bam complex.

The protein resides in the cell outer membrane. In terms of biological role, part of the outer membrane protein assembly complex, which is involved in assembly and insertion of beta-barrel proteins into the outer membrane. This is Outer membrane protein assembly factor BamB from Alkalilimnicola ehrlichii (strain ATCC BAA-1101 / DSM 17681 / MLHE-1).